An 84-amino-acid polypeptide reads, in one-letter code: uncharacterized protein (84 aa).

In terms of domain architecture, HTH cro/C1-type spans 7 to 62 (IDVMLAKRKMSVTELSERVGITMANLSILKNGKAKAIRLSTLEAICKALECQPGDI). Positions 18–37 (VTELSERVGITMANLSILKN) form a DNA-binding region, H-T-H motif.

This is an uncharacterized protein from Bacillus subtilis (strain 168).